We begin with the raw amino-acid sequence, 335 residues long: Protease HtpX homolog (335 aa).

Transmembrane regions (helical) follow at residues 9 to 29 (VYMM…STIA), 42 to 62 (LFTS…AIIY), and 64 to 84 (ILAY…LLII). His168 is a Zn(2+) binding site. Glu169 is an active-site residue. His172 is a Zn(2+) binding site. Helical transmembrane passes span 179–199 (AVML…YALL) and 213–233 (AAIG…VLAF). Glu238 provides a ligand contact to Zn(2+).

The protein belongs to the peptidase M48B family. The cofactor is Zn(2+).

The protein localises to the cell membrane. The protein is Protease HtpX homolog of Archaeoglobus fulgidus (strain ATCC 49558 / DSM 4304 / JCM 9628 / NBRC 100126 / VC-16).